We begin with the raw amino-acid sequence, 155 residues long: Methylated-DNA--protein-cysteine methyltransferase (155 aa).

Cysteine 119 acts as the Nucleophile; methyl group acceptor in catalysis.

Belongs to the MGMT family.

The protein localises to the cytoplasm. The catalysed reaction is a 6-O-methyl-2'-deoxyguanosine in DNA + L-cysteinyl-[protein] = S-methyl-L-cysteinyl-[protein] + a 2'-deoxyguanosine in DNA. It catalyses the reaction a 4-O-methyl-thymidine in DNA + L-cysteinyl-[protein] = a thymidine in DNA + S-methyl-L-cysteinyl-[protein]. Its function is as follows. Involved in the cellular defense against the biological effects of O6-methylguanine (O6-MeG) and O4-methylthymine (O4-MeT) in DNA. Repairs the methylated nucleobase in DNA by stoichiometrically transferring the methyl group to a cysteine residue in the enzyme. This is a suicide reaction: the enzyme is irreversibly inactivated. The chain is Methylated-DNA--protein-cysteine methyltransferase from Sulfolobus acidocaldarius (strain ATCC 33909 / DSM 639 / JCM 8929 / NBRC 15157 / NCIMB 11770).